A 250-amino-acid polypeptide reads, in one-letter code: Probable transcriptional regulatory protein DIP1378 (250 aa).

The disordered stretch occupies residues 1–22; the sequence is MSGHSKWATTKHKKAANDAKRG.

Belongs to the TACO1 family.

The protein localises to the cytoplasm. This chain is Probable transcriptional regulatory protein DIP1378, found in Corynebacterium diphtheriae (strain ATCC 700971 / NCTC 13129 / Biotype gravis).